We begin with the raw amino-acid sequence, 338 residues long: Anthranilate phosphoribosyltransferase (338 aa).

5-phospho-alpha-D-ribose 1-diphosphate is bound by residues G81, 84-85, T89, 91-94, 109-117, and S121; these read GD, NVST, and KHGNRSVSS. G81 contacts anthranilate. S93 is a Mg(2+) binding site. Position 112 (N112) interacts with anthranilate. Position 167 (R167) interacts with anthranilate. Residues D226 and E227 each coordinate Mg(2+).

This sequence belongs to the anthranilate phosphoribosyltransferase family. In terms of assembly, homodimer. Mg(2+) is required as a cofactor.

It carries out the reaction N-(5-phospho-beta-D-ribosyl)anthranilate + diphosphate = 5-phospho-alpha-D-ribose 1-diphosphate + anthranilate. The protein operates within amino-acid biosynthesis; L-tryptophan biosynthesis; L-tryptophan from chorismate: step 2/5. Its function is as follows. Catalyzes the transfer of the phosphoribosyl group of 5-phosphorylribose-1-pyrophosphate (PRPP) to anthranilate to yield N-(5'-phosphoribosyl)-anthranilate (PRA). The protein is Anthranilate phosphoribosyltransferase of Alkalilimnicola ehrlichii (strain ATCC BAA-1101 / DSM 17681 / MLHE-1).